Reading from the N-terminus, the 56-residue chain is Large ribosomal subunit protein bL32 (56 aa).

Residues 1–40 (MAVQQNKKSRSKRGMRRSHDSLGTAQLSVDATSGELHRRH) form a disordered region. Residues 7–16 (KKSRSKRGMR) show a composition bias toward basic residues. Residues 21-31 (SLGTAQLSVDA) are compositionally biased toward polar residues.

This sequence belongs to the bacterial ribosomal protein bL32 family.

The chain is Large ribosomal subunit protein bL32 from Shewanella halifaxensis (strain HAW-EB4).